The chain runs to 445 residues: Transcription termination factor MTERF15, mitochondrial (445 aa).

The transit peptide at 1–25 directs the protein to the mitochondrion; sequence MASKLKTFINLRDYPITLFNQIRSL.

Belongs to the mTERF family.

Its subcellular location is the mitochondrion. Functionally, transcription termination factor required for mitochondrial NAD2 intron 3 splicing and normal membrane respiratory chain Complex I activity. Essential for normal plant growth and development. Binds to RNA but not to double-stranded DNA. This is Transcription termination factor MTERF15, mitochondrial from Arabidopsis thaliana (Mouse-ear cress).